Reading from the N-terminus, the 239-residue chain is Putative zinc finger protein 132L (239 aa).

The tract at residues 20–40 (DASLSTKSPKREPSQEKEIKK) is disordered. Basic and acidic residues predominate over residues 28 to 40 (PKREPSQEKEIKK). 2 C3H1-type zinc fingers span residues 44-68 (IKKN…HPGE) and 81-106 (RRKT…HDES). A disordered region spans residues 128–151 (PGECKFSHPPPPPPSPPSPPPKEE). Positions 135–147 (HPPPPPPSPPSPP) are enriched in pro residues.

The protein is Putative zinc finger protein 132L of Acheta domesticus (House cricket).